The sequence spans 576 residues: Kinetochore-associated protein DSN1 (576 aa).

Residues 1 to 11 (MSLEPTQTVSG) are compositionally biased toward polar residues. 4 disordered regions span residues 1 to 22 (MSLEPTQTVSGTPPMLHQRTHK), 35 to 64 (LESDSKATLQSNEPTQKDEEETEYFENKQS), 185 to 205 (YSQPTAAGGPDMTTPQNISSS), and 227 to 246 (QPHYIQRTRERKKSIGSQRG). Residues 235 to 246 (RERKKSIGSQRG) are compositionally biased toward basic residues. A Phosphoserine modification is found at Ser-250. The segment at 412 to 437 (RSRRKFSERRKALPKEPKKLLPNSKN) is disordered. A compositionally biased stretch (basic and acidic residues) spans 420 to 430 (RRKALPKEPKK).

As to quaternary structure, component of the MIND kinetochore complex, which is composed of at least MTW1, NNF1, NSL1 and DSN1. Interacts with NSL1.

It is found in the nucleus. The protein localises to the chromosome. The protein resides in the centromere. It localises to the kinetochore. Acts as an essential component of the kinetochore MIND complex, which is required for the spindle checkpoint and kinetochore integrity. MIND plays a role in establishing a bipolar spindle-kinetochore interaction by joining kinetochore subunits contacting DNA to those contacting microtubules. This chain is Kinetochore-associated protein DSN1 (DSN1), found in Saccharomyces cerevisiae (strain ATCC 204508 / S288c) (Baker's yeast).